Consider the following 360-residue polypeptide: Phospho-N-acetylmuramoyl-pentapeptide-transferase (360 aa).

10 helical membrane passes run 21–41 (YITVRANLALLTALFISLWIG), 73–93 (TMGGVMILFSIGVSTLLWANL), 94–114 (ANPYIWVCLFVLFGYGAIGFV), 132–152 (WKYFWMSVVALVAILWLYWLG), 168–188 (IMPQLGLFYIVLSYFVIVGTG), 199–219 (GLAIMPTALVAGAFALIAWAT), 239–259 (VVVFCTAIVGASLGFLWFNTY), 263–283 (VFMGDVGSLALGGALGVVAIL), 288–308 (FLLVIMGGVFVVEALSVILQV), and 338–358 (VIIRFWIISLMLVLMGLVTLK).

It belongs to the glycosyltransferase 4 family. MraY subfamily. Requires Mg(2+) as cofactor.

Its subcellular location is the cell inner membrane. It carries out the reaction UDP-N-acetyl-alpha-D-muramoyl-L-alanyl-gamma-D-glutamyl-meso-2,6-diaminopimeloyl-D-alanyl-D-alanine + di-trans,octa-cis-undecaprenyl phosphate = di-trans,octa-cis-undecaprenyl diphospho-N-acetyl-alpha-D-muramoyl-L-alanyl-D-glutamyl-meso-2,6-diaminopimeloyl-D-alanyl-D-alanine + UMP. Its pathway is cell wall biogenesis; peptidoglycan biosynthesis. In terms of biological role, catalyzes the initial step of the lipid cycle reactions in the biosynthesis of the cell wall peptidoglycan: transfers peptidoglycan precursor phospho-MurNAc-pentapeptide from UDP-MurNAc-pentapeptide onto the lipid carrier undecaprenyl phosphate, yielding undecaprenyl-pyrophosphoryl-MurNAc-pentapeptide, known as lipid I. The sequence is that of Phospho-N-acetylmuramoyl-pentapeptide-transferase from Haemophilus influenzae (strain ATCC 51907 / DSM 11121 / KW20 / Rd).